Consider the following 163-residue polypeptide: Nucleotide-binding protein CYB_0891 (163 aa).

Belongs to the YajQ family.

Its function is as follows. Nucleotide-binding protein. In Synechococcus sp. (strain JA-2-3B'a(2-13)) (Cyanobacteria bacterium Yellowstone B-Prime), this protein is Nucleotide-binding protein CYB_0891.